Consider the following 547-residue polypeptide: RNA polymerase sigma factor sigF, chloroplastic (547 aa).

Residues 1–17 (MEATRNLVSSSPSFQTK) show a composition bias toward polar residues. Disordered regions lie at residues 1-28 (MEAT…SSPS) and 54-79 (FPAS…DDRT). The transit peptide at 1 to 55 (MEATRNLVSSSPSFQTKTHLKSSYSSPSSVVMLHDQTTTPVVNSRHLNSLSRHFP) directs the protein to the chloroplast. Basic and acidic residues predominate over residues 62-79 (EPREESRPLSHALRDDRT). 6 positions are modified to phosphoserine; by CK2: S94, S95, S174, S176, S177, and S180. A disordered region spans residues 163-226 (ANPSDNIKDS…QKTSAKKKYK (64 aa)). Over residues 172 to 181 (SLSTSSSMSL) the composition is skewed to low complexity. T249 is subject to Phosphothreonine; by CK2. Residues 335-348 (DLLQEGSMGLMKSV) carry the Polymerase core binding motif. The segment at residues 505 to 524 (LSEIGEIYGLSKERVRQLES) is a DNA-binding region (H-T-H motif).

The protein belongs to the sigma-70 factor family. As to quaternary structure, interacts (via N-terminus) with DG1 (via C-terminus). In terms of processing, phosphorylated to acquire sigma activity; site-specific phosphorylation regulates promoter affinity. Phosphorylation at Ser-174 by chloroplastic CK2 requires prior phosphorylation at Ser-177. Phosphorylation at either Ser-94, Ser-95 or Ser-174 is required for sigma activation. In terms of tissue distribution, expressed in seedling, accumulating progressively. Present in leaves but not in roots.

Its subcellular location is the plastid. It is found in the chloroplast. Functionally, sigma factors are initiation factors that promote the attachment of plastid-encoded RNA polymerase (PEP) to specific initiation sites and are then released. Regulates transcription in chloroplast in a DG1-dependent manner. Involved in light-dependent chloroplast development. Required during early plant development and primary leaf formation. This chain is RNA polymerase sigma factor sigF, chloroplastic (SIGF), found in Arabidopsis thaliana (Mouse-ear cress).